A 399-amino-acid polypeptide reads, in one-letter code: uncharacterized protein (399 aa).

11 consecutive transmembrane segments (helical) span residues 19-39, 46-66, 91-111, 123-143, 146-166, 183-203, 225-247, 283-303, 307-327, 335-355, and 369-389; these read IFSINLLYMGILSGISYPLFV, VNLLFAIVIGAVFEIPLLLMY, FYTIFGISLWLTYVLSQPILG, QFEQFLIVESLFPLVLLIIAS, IYAKIVDILAIFQIIIAIFIA, LLSALLFDLSAFIFINAISYI, VAILSILDSYSNLNILFALMPIW, VLLLIFSTETIANVLENLLGF, FGLDGLLFIFWNFIIVAFAYL, LFSIVLTSLAIQIFLFFYLGY, and IEYTILRIMILPIIGAIVYLL.

It is found in the host membrane. Putative amino acid transporter. This is an uncharacterized protein from Saccharolobus islandicus (Sulfolobus islandicus).